Consider the following 196-residue polypeptide: Pyridoxal 5'-phosphate synthase subunit PdxT (196 aa).

46–48 is an L-glutamine binding site; the sequence is GES. The active-site Nucleophile is the Cys78. Residues Arg105 and 133 to 134 each bind L-glutamine; that span reads IR. Residues His169 and Glu171 each act as charge relay system in the active site.

Belongs to the glutaminase PdxT/SNO family. As to quaternary structure, in the presence of PdxS, forms a dodecamer of heterodimers. Only shows activity in the heterodimer.

It carries out the reaction aldehydo-D-ribose 5-phosphate + D-glyceraldehyde 3-phosphate + L-glutamine = pyridoxal 5'-phosphate + L-glutamate + phosphate + 3 H2O + H(+). The catalysed reaction is L-glutamine + H2O = L-glutamate + NH4(+). The protein operates within cofactor biosynthesis; pyridoxal 5'-phosphate biosynthesis. In terms of biological role, catalyzes the hydrolysis of glutamine to glutamate and ammonia as part of the biosynthesis of pyridoxal 5'-phosphate. The resulting ammonia molecule is channeled to the active site of PdxS. In Geobacillus kaustophilus (strain HTA426), this protein is Pyridoxal 5'-phosphate synthase subunit PdxT.